Consider the following 201-residue polypeptide: Protease (201 aa).

Catalysis depends on residues His-56, Asp-73, and Cys-121.

It belongs to the peptidase C5 family. As to quaternary structure, interacts with protease cofactor pVI-C; this interaction is necessary for protease activation.

It is found in the virion. Its subcellular location is the host nucleus. The enzyme catalyses Cleaves proteins of the adenovirus and its host cell at two consensus sites: -Yaa-Xaa-Gly-Gly-|-Xaa- and -Yaa-Xaa-Gly-Xaa-|-Gly- (in which Yaa is Met, Ile or Leu, and Xaa is any amino acid).. Its activity is regulated as follows. Requires DNA and protease cofactor for maximal activation. Inside nascent virions, becomes partially activated by binding to the viral DNA, allowing it to cleave the cofactor that binds to the protease and fully activates it. Actin, like the viral protease cofactor, seems to act as a cofactor in the cleavage of cytokeratin 18 and of actin itself. Functionally, cleaves viral precursor proteins (pTP, pIIIa, pVI, pVII, pVIII, and pX) inside newly assembled particles giving rise to mature virions. Protease complexed to its cofactor slides along the viral DNA to specifically locate and cleave the viral precursors. Mature virions have a weakened organization compared to the unmature virions, thereby facilitating subsequent uncoating. Without maturation, the particle lacks infectivity and is unable to uncoat. Late in adenovirus infection, in the cytoplasm, may participate in the cytoskeleton destruction. Cleaves host cell cytoskeletal keratins K7 and K18. This chain is Protease, found in Homo sapiens (Human).